The following is a 427-amino-acid chain: Zinc finger protein 134 (427 aa).

Lysine 20 is covalently cross-linked (Glycyl lysine isopeptide (Lys-Gly) (interchain with G-Cter in SUMO2)). The C2H2-type 1 zinc-finger motif lies at 50–72; sequence LPCDICGPILKDILHLDEHQGTH. The C2H2-type 2; degenerate zinc finger occupies 78–100; sequence HTCGACGRQFWFSANLHQYQKCY. Residues lysine 135 and lysine 139 each participate in a glycyl lysine isopeptide (Lys-Gly) (interchain with G-Cter in SUMO2) cross-link. 9 C2H2-type zinc fingers span residues 176-198, 204-226, 232-254, 260-282, 288-310, 316-338, 344-366, 372-394, and 400-422; these read YKCS…QRIH, YECS…QRIH, YECS…KRIH, YKCN…QRVH, YKCS…ESIH, YDCS…QRIH, FECI…QRVH, FVCS…QRVH, and YECS…QKVH.

The protein belongs to the krueppel C2H2-type zinc-finger protein family.

It localises to the nucleus. Its function is as follows. May be involved in transcriptional regulation. The polypeptide is Zinc finger protein 134 (ZNF134) (Homo sapiens (Human)).